The primary structure comprises 158 residues: Endoribonuclease YbeY (158 aa).

Zn(2+)-binding residues include His118, His122, and His128.

This sequence belongs to the endoribonuclease YbeY family. Zn(2+) serves as cofactor.

It localises to the cytoplasm. Single strand-specific metallo-endoribonuclease involved in late-stage 70S ribosome quality control and in maturation of the 3' terminus of the 16S rRNA. This chain is Endoribonuclease YbeY, found in Bartonella bacilliformis (strain ATCC 35685 / KC583 / Herrer 020/F12,63).